A 343-amino-acid polypeptide reads, in one-letter code: N-acetyl-gamma-glutamyl-phosphate reductase (343 aa).

Cysteine 149 is an active-site residue.

This sequence belongs to the NAGSA dehydrogenase family. Type 1 subfamily.

It is found in the cytoplasm. The catalysed reaction is N-acetyl-L-glutamate 5-semialdehyde + phosphate + NADP(+) = N-acetyl-L-glutamyl 5-phosphate + NADPH + H(+). It participates in amino-acid biosynthesis; L-arginine biosynthesis; N(2)-acetyl-L-ornithine from L-glutamate: step 3/4. Functionally, catalyzes the NADPH-dependent reduction of N-acetyl-5-glutamyl phosphate to yield N-acetyl-L-glutamate 5-semialdehyde. This is N-acetyl-gamma-glutamyl-phosphate reductase from Methanococcus maripaludis (strain C7 / ATCC BAA-1331).